The sequence spans 43 residues: Protein PsbN (43 aa).

The helical transmembrane segment at 4–24 (ATFVAIFISCLLISFTGYALY) threads the bilayer.

This sequence belongs to the PsbN family.

The protein localises to the plastid. It is found in the chloroplast thylakoid membrane. Functionally, may play a role in photosystem I and II biogenesis. This is Protein PsbN from Marchantia polymorpha (Common liverwort).